We begin with the raw amino-acid sequence, 542 residues long: 4-coumarate--CoA ligase 2 (542 aa).

Residues Ser-189, Ser-190, Gly-191, Thr-192, Thr-193, and Lys-197 each contribute to the ATP site. Residues Tyr-239 and Ser-243 each contribute to the (E)-4-coumaroyl-AMP site. The (E)-caffeoyl-AMP site is built by Tyr-239 and Ser-243. The (E)-feruloyl-AMP site is built by Tyr-239 and Ser-243. Lys-260 contacts CoA. An SBD1 region spans residues 262–331; the sequence is DIVSFLELIQ…AKFPNAKLGQ (70 aa). Ala-309 provides a ligand contact to (E)-4-coumaroyl-AMP. A (E)-caffeoyl-AMP-binding site is contributed by Ala-309. Ala-309 lines the (E)-feruloyl-AMP pocket. Residues Gln-331, Gly-332, and Thr-336 each coordinate ATP. Gly-332, Thr-336, Met-344, Asp-420, Arg-435, Lys-437, and Lys-441 together coordinate (E)-4-coumaroyl-AMP. Positions 332, 336, 344, 420, 435, 437, and 441 each coordinate (E)-caffeoyl-AMP. (E)-feruloyl-AMP is bound by residues Gly-332, Thr-336, Met-344, Asp-420, Arg-435, Lys-437, and Lys-441. Positions 332 and 336 each coordinate AMP. Residues 332–399 form an SBD2 region; it reads GYGMTEAGPV…IRGDQIMKGY (68 aa). The ATP site is built by Asp-420 and Arg-435. Asp-420 contributes to the AMP binding site. AMP is bound by residues Lys-437 and Lys-441. CoA contacts are provided by Lys-443 and Gly-444. Gln-446 serves as a coordination point for AMP. Lys-526 contacts ATP.

The protein belongs to the ATP-dependent AMP-binding enzyme family. Mg(2+) is required as a cofactor. As to expression, mainly expressed in old stems and, to a lower extent, in flowers (e.g. in ovary), leaves, young stems, shoot tips and patel limbs.

The catalysed reaction is (E)-4-coumarate + ATP + CoA = (E)-4-coumaroyl-CoA + AMP + diphosphate. It catalyses the reaction (E)-caffeate + ATP + CoA = (E)-caffeoyl-CoA + AMP + diphosphate. It carries out the reaction (E)-ferulate + ATP + CoA = (E)-feruloyl-CoA + AMP + diphosphate. The enzyme catalyses (E)-cinnamate + ATP + CoA = (E)-cinnamoyl-CoA + AMP + diphosphate. The catalysed reaction is (E)-4-coumarate + ATP + H(+) = (E)-4-coumaroyl-AMP + diphosphate. It catalyses the reaction (E)-4-coumaroyl-AMP + CoA = (E)-4-coumaroyl-CoA + AMP + H(+). It carries out the reaction (E)-caffeate + ATP + H(+) = (E)-caffeoyl-AMP + diphosphate. The enzyme catalyses (E)-caffeoyl-AMP + CoA = (E)-caffeoyl-CoA + AMP + H(+). The catalysed reaction is (E)-ferulate + ATP + H(+) = (E)-feruloyl-AMP + diphosphate. It catalyses the reaction (E)-feruloyl-AMP + CoA = (E)-feruloyl-CoA + AMP + H(+). It functions in the pathway phytoalexin biosynthesis; 3,4',5-trihydroxystilbene biosynthesis; 3,4',5-trihydroxystilbene from trans-4-coumarate: step 1/2. In terms of biological role, major enzyme of the phenylpropanoid pathway that mediates the production of several precursors for numerous metabolites and regulates carbon flow. Catalyzes the formation of CoA thioesters using 4-coumarate, ferulate, caffeate, and cinnamate as substrates. Follows a two-step reaction mechanism, wherein a (hydroxy)cinnamate substrate first undergoes adenylation by ATP leading to an acyl-AMP, followed by a thioesterification in the presence of CoA to yield the final (hydroxy)cinnamoyl-CoA product. Almost inactive toward sinapate. This is 4-coumarate--CoA ligase 2 from Nicotiana tabacum (Common tobacco).